Here is a 165-residue protein sequence, read N- to C-terminus: Late embryogenesis abundant protein D-113 (165 aa).

Low complexity predominate over residues 1–13; sequence MQSMKDAAASAKA. 2 disordered regions span residues 1-76 and 92-165; these read MQSM…IGGT and GGTG…YRSY. Basic and acidic residues predominate over residues 14–60; sequence GMEKAKASMQEKVDQMKTRDPNEKEMARERKEERQEDAELRKQEARH. The span at 67–76 shows a compositional bias: gly residues; that stretch reads HVGGGGIGGT. Over residues 132–155 the composition is skewed to polar residues; sequence TTGNQDFPNAASNNAGTRRNTRGG.

It belongs to the LEA type 1 family.

LEA proteins are late embryonic proteins abundant in higher plant seed embryos. There are two subsets of LEA proteins (5a and 5b), the first ones are expressed when the cotyledon weight reach 80 mg and the second set are expressed above 100 mg. The function of those proteins is not known. This is Late embryogenesis abundant protein D-113 from Gossypium hirsutum (Upland cotton).